The chain runs to 694 residues: Probable metal-nicotianamine transporter YSL8 (694 aa).

The next 14 membrane-spanning stretches (helical) occupy residues isoleucine 38–methionine 58, leucine 62–methionine 82, cysteine 110–methionine 130, leucine 154–proline 174, isoleucine 215–alanine 235, valine 265–valine 285, valine 319–leucine 339, isoleucine 393–phenylalanine 413, valine 421–leucine 441, glycine 467–serine 487, methionine 506–tryptophan 526, leucine 567–alanine 587, phenylalanine 608–tryptophan 628, and valine 643–leucine 663.

It belongs to the YSL (TC 2.A.67.2) family. As to expression, expressed in root epidermis and exoderm.

It is found in the membrane. May be involved in the transport of nicotianamine-chelated metals. The chain is Probable metal-nicotianamine transporter YSL8 (YSL8) from Oryza sativa subsp. japonica (Rice).